The chain runs to 286 residues: Nucleotide-binding protein VC_2532 (286 aa).

8–15 contributes to the ATP binding site; the sequence is GQSGAGKS. 56–59 lines the GTP pocket; it reads DIRN.

Belongs to the RapZ-like family.

In terms of biological role, displays ATPase and GTPase activities. The chain is Nucleotide-binding protein VC_2532 from Vibrio cholerae serotype O1 (strain ATCC 39315 / El Tor Inaba N16961).